The sequence spans 298 residues: Probable phosphoserine phosphatase (298 aa).

The Nucleophile role is filled by D82. Residues D82 and D84 each coordinate Mg(2+). D84 (proton donor) is an active-site residue. Substrate is bound by residues E91, R127, 170–171 (SG), and K217. D240 is a binding site for Mg(2+). N243 serves as a coordination point for substrate.

The protein belongs to the HAD-like hydrolase superfamily. SerB family. Requires Mg(2+) as cofactor.

The catalysed reaction is O-phospho-L-serine + H2O = L-serine + phosphate. The enzyme catalyses O-phospho-D-serine + H2O = D-serine + phosphate. It participates in amino-acid biosynthesis; L-serine biosynthesis; L-serine from 3-phospho-D-glycerate: step 3/3. The chain is Probable phosphoserine phosphatase from Schizosaccharomyces pombe (strain 972 / ATCC 24843) (Fission yeast).